Consider the following 94-residue polypeptide: Probable Fe(2+)-trafficking protein (94 aa).

Belongs to the Fe(2+)-trafficking protein family.

Functionally, could be a mediator in iron transactions between iron acquisition and iron-requiring processes, such as synthesis and/or repair of Fe-S clusters in biosynthetic enzymes. This chain is Probable Fe(2+)-trafficking protein, found in Haemophilus ducreyi (strain 35000HP / ATCC 700724).